A 57-amino-acid polypeptide reads, in one-letter code: Potassium channel toxin alpha-KTx 1.5 (57 aa).

An N-terminal signal peptide occupies residues 1 to 20 (MKISFLLLALVICSIGWSEA). A Pyrrolidone carboxylic acid modification is found at glutamine 21. Cystine bridges form between cysteine 27-cysteine 48, cysteine 33-cysteine 53, and cysteine 37-cysteine 55.

It belongs to the short scorpion toxin superfamily. Potassium channel inhibitor family. Alpha-KTx 01 subfamily. Expressed by the venom gland.

It localises to the secreted. Functionally, potent blocker of both large-conductance calcium-activated potassium channels (KCa1.1/KCNMA1) and voltage-gated potassium channels (Kv1.3/KCNA3). Has also been shown to moderately inhibit Kv1.2/KCNA2 and weakly inhibit Kv1.1/KCNA1 channels, as well as 5-hydroxytryptamine 3 receptors (HTR3A). The protein is Potassium channel toxin alpha-KTx 1.5 of Olivierus martensii (Manchurian scorpion).